The following is a 274-amino-acid chain: Thymidylate synthase (274 aa).

Arg21 contributes to the dUMP binding site. Residue His51 participates in (6R)-5,10-methylene-5,6,7,8-tetrahydrofolate binding. 123–124 is a binding site for dUMP; sequence RR. Cys156 functions as the Nucleophile in the catalytic mechanism. DUMP-binding positions include 176–179, Asn187, and 217–219; these read RSAD and HIY. Asp179 is a (6R)-5,10-methylene-5,6,7,8-tetrahydrofolate binding site. Residue Ala273 coordinates (6R)-5,10-methylene-5,6,7,8-tetrahydrofolate.

Belongs to the thymidylate synthase family. Bacterial-type ThyA subfamily. As to quaternary structure, homodimer.

It localises to the cytoplasm. It catalyses the reaction dUMP + (6R)-5,10-methylene-5,6,7,8-tetrahydrofolate = 7,8-dihydrofolate + dTMP. Its pathway is pyrimidine metabolism; dTTP biosynthesis. Functionally, catalyzes the reductive methylation of 2'-deoxyuridine-5'-monophosphate (dUMP) to 2'-deoxythymidine-5'-monophosphate (dTMP) while utilizing 5,10-methylenetetrahydrofolate (mTHF) as the methyl donor and reductant in the reaction, yielding dihydrofolate (DHF) as a by-product. This enzymatic reaction provides an intracellular de novo source of dTMP, an essential precursor for DNA biosynthesis. The chain is Thymidylate synthase from Flavobacterium psychrophilum (strain ATCC 49511 / DSM 21280 / CIP 103535 / JIP02/86).